Consider the following 173-residue polypeptide: Small ribosomal subunit protein uS9 (173 aa).

The segment at 20 to 53 is disordered; the sequence is SYTTESEVPVEGEYTSESVASRFGEPQPAAGLGR.

Belongs to the universal ribosomal protein uS9 family.

The polypeptide is Small ribosomal subunit protein uS9 (Streptomyces avermitilis (strain ATCC 31267 / DSM 46492 / JCM 5070 / NBRC 14893 / NCIMB 12804 / NRRL 8165 / MA-4680)).